The following is a 151-amino-acid chain: MLFNQRRGISPAALIIGSTMLITALSPQIRQRISGFITGQMNRRNSENNTFDASNVGNMVKQAFSGSSGSSGDNQDRSQHQSQRQNGRQHQHAGQQQPQHQHTQSQTRQTETAAKKRQPHYAEPIHFEQNAMNVMDDNTMMEMLEDLEPGR.

Over residues 40–57 (QMNRRNSENNTFDASNVG) the composition is skewed to polar residues. The disordered stretch occupies residues 40-125 (QMNRRNSENN…KRQPHYAEPI (86 aa)). Low complexity predominate over residues 83–110 (QRQNGRQHQHAGQQQPQHQHTQSQTRQT).

This is an uncharacterized protein from Bacillus subtilis (strain 168).